A 944-amino-acid polypeptide reads, in one-letter code: Ras guanine nucleotide exchange factor O (944 aa).

The RING-type zinc-finger motif lies at 16-54 (CGICQNLFKDPNTLIPCGHAFCLDCLTTNASIKNCIQCK). A disordered region spans residues 80 to 102 (NNSNNNSNGENTNNNNNIINNER). The segment at 152–192 (NNIRYCMEHYEHYYAFCNDCQAPVCPSCLLTTHNRHGMIPL) adopts a B box-type zinc-finger fold. Zn(2+) contacts are provided by cysteine 157, histidine 160, cysteine 179, and histidine 184. 2 coiled-coil regions span residues 200 to 234 (KMKEYRDIVQSFKTKMSQYKDNITLYQKEIELLDS) and 271 to 303 (ASHMELTDRSSTLENEISEMEKLIGNGTDKFKD). The region spanning 402-528 (EEFEVKYGSL…LLLNSNENSP (127 aa)) is the N-terminal Ras-GEF domain. Disordered regions lie at residues 530–562 (ITSSQSLSSQSLYSQTNNNNNNNNNNSNNLQPT), 587–623 (TNNGTCKIQNSPPKNYQQSNYSSIFNGPSSSSSSSPS), and 644–670 (ESPLNSPRNNNNNNNNNSPRSSSFGAS). The span at 590–604 (GTCKIQNSPPKNYQQ) shows a compositional bias: polar residues. 2 stretches are compositionally biased toward low complexity: residues 605–623 (SNYSSIFNGPSSSSSSSPS) and 648–670 (NSPRNNNNNNNNNSPRSSSFGAS). Positions 727 to 944 (DEFEIAKQLT…EYLNVHIDEL (218 aa)) constitute a Ras-GEF domain.

In terms of biological role, promotes the exchange of Ras-bound GDP by GTP. The chain is Ras guanine nucleotide exchange factor O (gefO) from Dictyostelium discoideum (Social amoeba).